Reading from the N-terminus, the 59-residue chain is Cuticle protein 7 isoform c (59 aa).

Glutamine 1 bears the Pyrrolidone carboxylic acid mark.

The chain is Cuticle protein 7 isoform c from Limulus polyphemus (Atlantic horseshoe crab).